The sequence spans 111 residues: uncharacterized protein (111 aa).

This is an uncharacterized protein from Methanocaldococcus jannaschii (strain ATCC 43067 / DSM 2661 / JAL-1 / JCM 10045 / NBRC 100440) (Methanococcus jannaschii).